Here is a 406-residue protein sequence, read N- to C-terminus: Imidazolonepropionase (406 aa).

H75 and H77 together coordinate Fe(3+). Positions 75 and 77 each coordinate Zn(2+). Residues R84, Y147, and H180 each coordinate 4-imidazolone-5-propanoate. Y147 serves as a coordination point for N-formimidoyl-L-glutamate. H245 contacts Fe(3+). H245 provides a ligand contact to Zn(2+). Residue Q248 coordinates 4-imidazolone-5-propanoate. A Fe(3+)-binding site is contributed by D320. Zn(2+) is bound at residue D320. 2 residues coordinate N-formimidoyl-L-glutamate: N322 and G324. T325 provides a ligand contact to 4-imidazolone-5-propanoate.

This sequence belongs to the metallo-dependent hydrolases superfamily. HutI family. Requires Zn(2+) as cofactor. The cofactor is Fe(3+).

The protein resides in the cytoplasm. It catalyses the reaction 4-imidazolone-5-propanoate + H2O = N-formimidoyl-L-glutamate. The protein operates within amino-acid degradation; L-histidine degradation into L-glutamate; N-formimidoyl-L-glutamate from L-histidine: step 3/3. Its function is as follows. Catalyzes the hydrolytic cleavage of the carbon-nitrogen bond in imidazolone-5-propanoate to yield N-formimidoyl-L-glutamate. It is the third step in the universal histidine degradation pathway. This is Imidazolonepropionase from Hyphomonas neptunium (strain ATCC 15444).